The sequence spans 567 residues: Urease subunit alpha (567 aa).

Residues 129–567 (GGVDTHIHFI…LPMAQRYFLF (439 aa)) enclose the Urease domain. Residues histidine 134, histidine 136, and lysine 217 each contribute to the Ni(2+) site. N6-carboxylysine is present on lysine 217. Histidine 219 is a binding site for substrate. Positions 246 and 272 each coordinate Ni(2+). Histidine 320 functions as the Proton donor in the catalytic mechanism. Aspartate 360 lines the Ni(2+) pocket.

This sequence belongs to the metallo-dependent hydrolases superfamily. Urease alpha subunit family. As to quaternary structure, heterotrimer of UreA (gamma), UreB (beta) and UreC (alpha) subunits. Three heterotrimers associate to form the active enzyme. The cofactor is Ni cation. In terms of processing, carboxylation allows a single lysine to coordinate two nickel ions.

The protein localises to the cytoplasm. The enzyme catalyses urea + 2 H2O + H(+) = hydrogencarbonate + 2 NH4(+). It functions in the pathway nitrogen metabolism; urea degradation; CO(2) and NH(3) from urea (urease route): step 1/1. This Aliivibrio fischeri (strain MJ11) (Vibrio fischeri) protein is Urease subunit alpha.